A 93-amino-acid polypeptide reads, in one-letter code: Large ribosomal subunit protein uL23 (93 aa).

It belongs to the universal ribosomal protein uL23 family. As to quaternary structure, part of the 50S ribosomal subunit. Contacts protein L29, and trigger factor when it is bound to the ribosome.

One of the early assembly proteins it binds 23S rRNA. One of the proteins that surrounds the polypeptide exit tunnel on the outside of the ribosome. Forms the main docking site for trigger factor binding to the ribosome. This Sulfurovum sp. (strain NBC37-1) protein is Large ribosomal subunit protein uL23.